Here is a 163-residue protein sequence, read N- to C-terminus: Nucleotide-binding protein SACE_6882 (163 aa).

Belongs to the YajQ family.

Functionally, nucleotide-binding protein. The sequence is that of Nucleotide-binding protein SACE_6882 from Saccharopolyspora erythraea (strain ATCC 11635 / DSM 40517 / JCM 4748 / NBRC 13426 / NCIMB 8594 / NRRL 2338).